A 54-amino-acid chain; its full sequence is UPF0235 protein in proC 3'region (54 aa).

Belongs to the UPF0235 family.

The protein is UPF0235 protein in proC 3'region of Vibrio alginolyticus.